We begin with the raw amino-acid sequence, 68 residues long: MFSGKEITLFALSTLIALIVLNYMSATPNPVCLIELTGHSAVLRGNNCESLTSGVIEALSAHLHGLRN.

The Lumenal portion of the chain corresponds to 1–6 (MFSGKE). Residues 7 to 26 (ITLFALSTLIALIVLNYMSA) traverse the membrane as a helical segment. Topologically, residues 27–68 (TPNPVCLIELTGHSAVLRGNNCESLTSGVIEALSAHLHGLRN) are cytoplasmic.

It belongs to the Tymovirales TGBp3 protein family.

It localises to the host endoplasmic reticulum membrane. Functionally, plays a role in viral cell-to-cell propagation, by facilitating genome transport to neighboring plant cells through plasmosdesmata. May induce the formation of granular vesicles derived from the Endoplasmic reticulum, which align on actin filaments. In Papaya mosaic potexvirus (PMV), this protein is Movement protein TGBp3.